Reading from the N-terminus, the 256-residue chain is Hydroxyacylglutathione hydrolase (256 aa).

Zn(2+)-binding residues include histidine 55, histidine 57, aspartate 59, histidine 60, histidine 113, aspartate 132, and histidine 170.

This sequence belongs to the metallo-beta-lactamase superfamily. Glyoxalase II family. In terms of assembly, monomer. The cofactor is Zn(2+).

It catalyses the reaction an S-(2-hydroxyacyl)glutathione + H2O = a 2-hydroxy carboxylate + glutathione + H(+). Its pathway is secondary metabolite metabolism; methylglyoxal degradation; (R)-lactate from methylglyoxal: step 2/2. Functionally, thiolesterase that catalyzes the hydrolysis of S-D-lactoyl-glutathione to form glutathione and D-lactic acid. This Methylococcus capsulatus (strain ATCC 33009 / NCIMB 11132 / Bath) protein is Hydroxyacylglutathione hydrolase.